We begin with the raw amino-acid sequence, 574 residues long: Septation ring formation regulator EzrA (574 aa).

Residues 1-7 (MPTGTII) are Extracellular-facing. Residues 8-26 (LIVSIVIILIIAYVACLIV) form a helical membrane-spanning segment. Residues 27-574 (RKRNDNLLVA…YEKTREAIRY (548 aa)) are Cytoplasmic-facing. The stretch at 105 to 189 (SAKNAIDSID…IEVEFSEFVM (85 aa)) forms a coiled coil.

This sequence belongs to the EzrA family.

It localises to the cell membrane. In terms of biological role, negative regulator of FtsZ ring formation; modulates the frequency and position of FtsZ ring formation. Inhibits FtsZ ring formation at polar sites. Interacts either with FtsZ or with one of its binding partners to promote depolymerization. This chain is Septation ring formation regulator EzrA, found in Streptococcus suis (strain 98HAH33).